The following is a 252-amino-acid chain: Probable transcriptional regulatory protein TW504 (252 aa).

It belongs to the TACO1 family.

It localises to the cytoplasm. In Tropheryma whipplei (strain TW08/27) (Whipple's bacillus), this protein is Probable transcriptional regulatory protein TW504.